The chain runs to 37 residues: Large ribosomal subunit protein bL36 (37 aa).

The protein belongs to the bacterial ribosomal protein bL36 family.

In Syntrophotalea carbinolica (strain DSM 2380 / NBRC 103641 / GraBd1) (Pelobacter carbinolicus), this protein is Large ribosomal subunit protein bL36.